The primary structure comprises 210 residues: uncharacterized protein (210 aa).

Ser-18, Ser-39, Ser-41, Ser-57, and Ser-60 each carry phosphoserine. Over residues 33–46 (LDLDQRSMSPSNIA) the composition is skewed to polar residues. The tract at residues 33-58 (LDLDQRSMSPSNIASGEDRITRTNSG) is disordered. 2 disordered regions span residues 100-139 (YDHN…YKVS) and 177-210 (DSAP…NVHT). Polar residues predominate over residues 102–116 (HNNGTKSPTPKTSNM). Over residues 130–139 (NDKDDKYKVS) the composition is skewed to basic and acidic residues. Residues Ser-178, Ser-189, and Ser-192 each carry the phosphoserine modification. Polar residues predominate over residues 191 to 210 (HSPSLNSMDNTTKHSSNVHT).

This is an uncharacterized protein from Saccharomyces cerevisiae (strain ATCC 204508 / S288c) (Baker's yeast).